A 147-amino-acid chain; its full sequence is Protein phosphatase 1 regulatory subunit 14A (147 aa).

The segment covering 1 to 11 (MAAQRLGKRVL) has biased composition (basic residues). The tract at residues 1-36 (MAAQRLGKRVLSKLQSPSRARGPGGSPSGLQKRHAR) is disordered. Ser-26 is modified (phosphoserine). Positions 35–120 (ARVTVKYDRR…LLAKLRGLHK (86 aa)) are inhibitory. Thr-38 is modified (phosphothreonine; by PKC). Positions 118–147 (LHKQPGFPQPSPSDDPSLSPRQDRAHTAPP) are disordered. Phosphoserine is present on residues Ser-128, Ser-134, and Ser-136. A compositionally biased stretch (basic and acidic residues) spans 138 to 147 (RQDRAHTAPP).

Belongs to the PP1 inhibitor family.

Its subcellular location is the cytoplasm. Its function is as follows. Inhibitor of PPP1CA. Has over 1000-fold higher inhibitory activity when phosphorylated, creating a molecular switch for regulating the phosphorylation status of PPP1CA substrates and smooth muscle contraction. In Mus musculus (Mouse), this protein is Protein phosphatase 1 regulatory subunit 14A (Ppp1r14a).